Consider the following 596-residue polypeptide: Arrestin domain-containing protein C31A2.12 (596 aa).

A helical membrane pass occupies residues 194–211 (AYAIGSYIPIHFVLVPLL). Disordered stretches follow at residues 363-387 (NLDT…TYAS) and 405-446 (QQQP…VITR). Thr-373 and Thr-374 each carry phosphothreonine. Composition is skewed to polar residues over residues 405-420 (QQQP…SPSN) and 430-446 (SLGS…VITR). Ser-452, Ser-474, Ser-493, and Ser-497 each carry phosphoserine. Residues 493–596 (SRPPSPGIVT…MLPSGFSRRN (104 aa)) form a disordered region. Phosphothreonine is present on residues Thr-502 and Thr-507. The segment covering 504–522 (PQRTSPSFFVSPTESTRQS) has biased composition (polar residues). Residue Ser-514 is modified to Phosphoserine. The segment covering 531 to 555 (HSTSSSSGISPSHSSASLAHLSQAS) has biased composition (low complexity).

It belongs to the arrestin family.

It is found in the membrane. The chain is Arrestin domain-containing protein C31A2.12 from Schizosaccharomyces pombe (strain 972 / ATCC 24843) (Fission yeast).